The following is a 351-amino-acid chain: MYSLFRPLLFTCDTERAHDISLRTLDIAYHSGALPLLTRHTRPLPTTAFGLNFPNPVGLAAGLDKNGTHIDALFALGFGFIEIGTTTPRPQAGNPKPRLFRLTQQQAVINRMGFNNLGVDALVRNVAGARRRNGPLGINIGKNKDTPNEQASNDYRYCLERVYALADYVTINLSSPNTAGLRALQEEQTLRRLIGELRETQETLAAKHGRHVPMLIKMAPDLSDSDIDAAARVLNEMSVDGVIATNTTVTRPLLRQHPLASEAGGLSGAPLLGQSTLVLRRLRTHLPETIDLIGVGGICCGADAGAKMAAGASLVQCYTGLIFKGPQLVGECVEAIRRRLEASSSGRENTQ.

FMN contacts are provided by residues 61–65 and Thr85; that span reads AGLDK. Substrate is bound at residue Lys65. Substrate is bound at residue 110–114; the sequence is NRMGF. FMN-binding residues include Asn139 and Asn172. Residue Asn172 participates in substrate binding. Ser175 serves as the catalytic Nucleophile. A substrate-binding site is contributed by Asn177. Positions 217 and 245 each coordinate FMN. 246-247 is a substrate binding site; the sequence is NT. FMN-binding positions include Gly268, Gly297, and 318 to 319; that span reads YT.

This sequence belongs to the dihydroorotate dehydrogenase family. Type 2 subfamily. Monomer. The cofactor is FMN.

The protein resides in the cell membrane. The enzyme catalyses (S)-dihydroorotate + a quinone = orotate + a quinol. It participates in pyrimidine metabolism; UMP biosynthesis via de novo pathway; orotate from (S)-dihydroorotate (quinone route): step 1/1. Catalyzes the conversion of dihydroorotate to orotate with quinone as electron acceptor. The sequence is that of Dihydroorotate dehydrogenase (quinone) from Xylella fastidiosa (strain M12).